Here is a 226-residue protein sequence, read N- to C-terminus: Small ribosomal subunit protein uS3 (226 aa).

Residues 39–107 (VRKFLNKELR…PAQINISEVR (69 aa)) form the KH type-2 domain.

This sequence belongs to the universal ribosomal protein uS3 family. In terms of assembly, part of the 30S ribosomal subunit. Forms a tight complex with proteins S10 and S14.

In terms of biological role, binds the lower part of the 30S subunit head. Binds mRNA in the 70S ribosome, positioning it for translation. The polypeptide is Small ribosomal subunit protein uS3 (Idiomarina loihiensis (strain ATCC BAA-735 / DSM 15497 / L2-TR)).